Here is a 201-residue protein sequence, read N- to C-terminus: Translation initiation factor IF-3 (201 aa).

The disordered stretch occupies residues 167 to 201 (PHRGAKTRARARHPGEPAGGPPPKPTAGDSKAAPN). Residues 169–178 (RGAKTRARAR) are compositionally biased toward basic residues.

Belongs to the IF-3 family. Monomer.

It localises to the cytoplasm. Its function is as follows. IF-3 binds to the 30S ribosomal subunit and shifts the equilibrium between 70S ribosomes and their 50S and 30S subunits in favor of the free subunits, thus enhancing the availability of 30S subunits on which protein synthesis initiation begins. In Mycobacterium bovis (strain ATCC BAA-935 / AF2122/97), this protein is Translation initiation factor IF-3.